We begin with the raw amino-acid sequence, 387 residues long: Trichocyst matrix protein T2-C (387 aa).

An N-terminal signal peptide occupies residues 1-19 (MKTIILALALIVLASSTQA). The propeptide occupies 20-48 (DVIATIKKIDQSPFGRTLFDTIWLELQTG). Residues 51-163 (LDRLLQTLTD…KVLEHQEATA (113 aa)) adopt a coiled-coil conformation. Positions 184 to 239 (KGKATKQPAHKFTKEVASMIQKHFTTSAKKAAKFQHRKGYSKLFKAFATIASKVEQ) are excised as a propeptide. Residues 294 to 333 (TALANAQSDLAALNDVIAQVEASLDTTNQRIENVSADRND) adopt a coiled-coil conformation.

The protein belongs to the TMP family. Post-translationally, two components are produced by post-translational processing from the precursor peptide.

It is found in the trichocyst. In terms of biological role, structural protein that crystallize inside the trichocyst matrix. The protein is Trichocyst matrix protein T2-C (T2C) of Paramecium tetraurelia.